Here is a 1462-residue protein sequence, read N- to C-terminus: NK-tumor recognition protein (1462 aa).

The 166-residue stretch at 10–175 (HFDIEINREP…ADVRVIDCGV (166 aa)) folds into the PPIase cyclophilin-type domain. 2 disordered regions span residues 187–591 (KKRK…TMAQ) and 607–627 (VIPL…KPWK). Residues 198–213 (SDSSSNSSSSSESSSE) are compositionally biased toward low complexity. Basic residues predominate over residues 221–240 (SRRRKHKRRPKVKRSKKRRK). Basic and acidic residues-rich tracts occupy residues 241 to 250 (EASSSEEPRN) and 258 to 286 (GHSE…RPEE). Lys-323 participates in a covalent cross-link: Glycyl lysine isopeptide (Lys-Gly) (interchain with G-Cter in SUMO2). The segment covering 329–345 (SGRKIKGRGTIRYHTPP) has biased composition (basic residues). Ser-379, Ser-401, and Ser-416 each carry phosphoserine. Over residues 382 to 402 (KWSKGDKLSDPCSSRWDERSL) the composition is skewed to basic and acidic residues. Over residues 403–421 (SQRSRSWSYNGYYSDLSTA) the composition is skewed to polar residues. Residues 423 to 459 (HSGHHKKRRKEKKVKHKKKGKKQKHCRRHKQTKKRRI) show a composition bias toward basic residues. Phosphoserine is present on residues Ser-463 and Ser-471. Residues 497–507 (KRDWSKSDKDV) show a composition bias toward basic and acidic residues. Over residues 524 to 542 (HSQSYSRGSSRSRTASKSS) the composition is skewed to low complexity. Residues 543–568 (SHSRSRSKSRSSSKSGHRKRASKSPR) are compositionally biased toward basic residues. Residues Lys-578 and Lys-581 each participate in a glycyl lysine isopeptide (Lys-Gly) (interchain with G-Cter in SUMO2) cross-link. Ser-613 carries the post-translational modification Phosphoserine. Residue Lys-639 forms a Glycyl lysine isopeptide (Lys-Gly) (interchain with G-Cter in SUMO2) linkage. Ser-648 bears the Phosphoserine mark. Glycyl lysine isopeptide (Lys-Gly) (interchain with G-Cter in SUMO2) cross-links involve residues Lys-656 and Lys-666. The tract at residues 658–1072 (TGSSSSYHKR…EEDLSGKHDT (415 aa)) is disordered. Composition is skewed to low complexity over residues 699–725 (SRSY…PSSR) and 736–749 (SQCS…SISS). A compositionally biased stretch (basic residues) spans 754-774 (RAKRRLRSSGKKNSVSHKKHS). Residues 775–800 (SSSEKTLHSKYVKGRDRSSCVRKYSE) show a composition bias toward basic and acidic residues. The segment covering 801–815 (SRSSLDYSSDSEQSS) has biased composition (low complexity). 2 stretches are compositionally biased toward basic and acidic residues: residues 823-870 (QEKE…DHLR) and 885-909 (WDSE…SSDK). Ser-866, Ser-887, Ser-889, Ser-891, and Ser-907 each carry phosphoserine. Residues 910–922 (EEGEATSDSESEV) show a composition bias toward acidic residues. The segment covering 932–969 (TTKSSTNTSLPDDNGAWKSSKQRTSTSDSEGSCSNSEN) has biased composition (polar residues). Residues 988–1013 (EHTKKVKEKLKGKKDKKHKAPKRKQA) are compositionally biased toward basic residues. A compositionally biased stretch (acidic residues) spans 1022-1031 (FGEEEEEEID). The span at 1032–1072 (DKQVTQESKEKKVSENNETIKDNILKTEKSSEEDLSGKHDT) shows a compositional bias: basic and acidic residues. Lys-1057 participates in a covalent cross-link: Glycyl lysine isopeptide (Lys-Gly) (interchain with G-Cter in SUMO2). Phosphoserine is present on residues Ser-1077 and Ser-1146. The interval 1129 to 1156 (MEICTPDRSSPAKVEETSPLGNARLDTP) is disordered. Residue Thr-1155 is modified to Phosphothreonine. Lys-1163 participates in a covalent cross-link: Glycyl lysine isopeptide (Lys-Gly) (interchain with G-Cter in SUMO2). Residues 1169–1215 (EHPQAEVVKQESSMSESKVLGEVGKQDSSSASLASAGESTGKKEVAE) form a disordered region. Lys-1177 is covalently cross-linked (Glycyl lysine isopeptide (Lys-Gly) (interchain with G-Cter in SUMO1); alternate). Residue Lys-1177 forms a Glycyl lysine isopeptide (Lys-Gly) (interchain with G-Cter in SUMO2); alternate linkage. At Ser-1203 the chain carries Phosphoserine. Residues Lys-1216, Lys-1225, and Lys-1258 each participate in a glycyl lysine isopeptide (Lys-Gly) (interchain with G-Cter in SUMO2) cross-link. A disordered region spans residues 1251–1462 (LTTVPEMKPQ…RSPSESSRYS (212 aa)). Positions 1311 to 1348 (SRSPSRSRSKSETKSRHRTRSVSYSHSRSRSRSSTSSY) are arg/Ser tandem repeat-rich. 2 stretches are compositionally biased toward low complexity: residues 1331-1351 (SVSY…YRSR) and 1359-1376 (RGWY…SYRS). A compositionally biased stretch (basic residues) spans 1377-1388 (YKSHRTSSRSRS). The segment covering 1389–1410 (RSSSYDPHSRSRSYTYDSYYSR) has biased composition (low complexity). Over residues 1425–1435 (RGRSYNRRSRS) the composition is skewed to basic residues.

The protein resides in the cell membrane. It carries out the reaction [protein]-peptidylproline (omega=180) = [protein]-peptidylproline (omega=0). Its activity is regulated as follows. Inhibited by cyclosporin A (CsA). Functionally, PPIase that catalyzes the cis-trans isomerization of proline imidic peptide bonds in oligopeptides and may therefore assist protein folding. Component of a putative tumor-recognition complex involved in the function of NK cells. The protein is NK-tumor recognition protein of Homo sapiens (Human).